Consider the following 416-residue polypeptide: Phosphoglycerate kinase (416 aa).

(2R)-3-phosphoglycerate-binding residues include Val-23, Asp-24, Phe-25, Asn-26, Gln-38, Arg-39, Ser-62, His-63, Gly-65, Arg-66, Leu-121, Arg-122, His-168, and Arg-169. Gly-212 is a binding site for ADP. A CDP-binding site is contributed by Gly-212. Ala-213 and Lys-214 together coordinate AMP. Ala-213 is a binding site for ATP. Ala-213 contributes to the Mg(2+) binding site. Ala-216 and Asp-217 together coordinate Mg(2+). Asp-217 lines the CDP pocket. AMP is bound at residue Lys-218. ATP is bound at residue Lys-218. Position 236 (Gly-236) interacts with ADP. CDP is bound at residue Gly-236. 2 residues coordinate AMP: Gly-237 and Gly-311. Gly-237 and Gly-311 together coordinate ATP. Positions 336 and 341 each coordinate CDP. Residue Phe-341 coordinates ADP. Position 342 (Glu-342) interacts with AMP. Residues Glu-342, Asp-373, and Thr-374 each coordinate ATP. Asp-373 is a Mg(2+) binding site.

The protein belongs to the phosphoglycerate kinase family. In terms of assembly, monomer. The cofactor is Mg(2+).

The protein resides in the cytoplasm. It localises to the mitochondrion. The catalysed reaction is (2R)-3-phosphoglycerate + ATP = (2R)-3-phospho-glyceroyl phosphate + ADP. It functions in the pathway carbohydrate degradation; glycolysis; pyruvate from D-glyceraldehyde 3-phosphate: step 2/5. Its function is as follows. Catalyzes one of the two ATP producing reactions in the glycolytic pathway via the reversible conversion of 1,3-diphosphoglycerate to 3-phosphoglycerate. Both L- and D- forms of purine and pyrimidine nucleotides can be used as substrates, but the activity is much lower on pyrimidines. Negatively regulates the biosynthesis of acetyl-CoA from pyruvate in the mitochondrion. This chain is Phosphoglycerate kinase (PGK1), found in Eremothecium gossypii (strain ATCC 10895 / CBS 109.51 / FGSC 9923 / NRRL Y-1056) (Yeast).